A 2075-amino-acid chain; its full sequence is MPWPFSESIKKRACRYLLQRYLGHFLQEKLSLEQLSLDLYQGTGSLAQVPLDKWCLNEILESADAPLEVTEGFIQSISLSVPWGSLLQDNCALEVRGLEMVFRPRPRVATGSEPMYWSSFMTSSMQLAKECLSQKLTDEQGEASQPFEGLEKFAETIETVLRRVKVTFIDTVLRIEHVPENSKTGAALEIRVDRTVYCDETADESSGVNVHQPTAFAHKLLQLSGVSLFWDEFSASAKSSPVCSTAPVETEPKLSPSWNPKIVYEPHPQLTRTLPEIAPSDPVQIGRLLGRLELSLTLKQNEVLPGAKLDVDGQIDSFHLFLSPRQVHLLLDMLAAIAGPENSSKIGLANKDRKNRPMQQEDEYRIQMELNRYYLRKDSLSMGVSSEKSFYETETARTPSSREEEVFFSMADMDMSHSLSSLPPLGDPPHMDLELSLTSTYTNTPAGSPLSATVLQPTWGEFADHKEQPVRGPAFQSDVVHPASLQKAALSSRSASVDESRPEFICRLALGIFSVSVLHIDPLSPAETSLNVNPLTRMATDFFSCVEKMDPAIFSTGDFKSFRAVFAEACSHDHLRFIGTGIKVSYEQRQRSASRHFSTDMSVGQMEFLECLFPTDCHSVPSHYTELLTFHSKEGTDAHLPVCLQLHYKHSETRGPQGNQARLSSVPQKAELQIKLNPVCCELDISIVDRLNSLLQPQKLTTVEMMASHMYASYNKHISLHKAFTEVFLDDSHSPANRRVSVQVATPALHLSVRFPIPDLRSDQERGPWFKKSLQKETLHLEFTDLESKTEFVGGSTPEQTKLELTFRELSGSFQEEKGGPSVKFFHVSGGVDGDTASSDDFDWPRMVLKINPPAMHSILERIAAEEEEENDGHYQEEEDGGAHSLKDVCDLRRPAPSPFSSRRVMFENEQMVMPGDPVEMTEFQDKAISNSHYVLELLLPNIHLTLPNKGFYEKLYNRIFNDLLLWEPTAPSPVETLENVSYGIGLSVASQLINTFSKDSFSPFKSAVHYDEDSGSEEETLQYFSAVDPNYRSRRKKKLDSQNKNSQSFLSVLLSINHGLMAVFTDVKQENGDPMESKHGEFWLEFNSGSFFCVTKYEGFEDKHYICLHSSSLRLYHKGIVDGAILPTETRLPCSTRPHWLEPTIYSSEEDGLSRTASDGVGGDNLNMLSVAVKILSDKSESNTKEFLVAVGLKGATLQHRVLPAGLSWHEQILNFLNIADEPVLGYNPPTSFTTFHVHLWSCALDYRPLHLPLRSLLTVETFSISSSVALDKSSSTLRIIMDEAALHLSDKCNTVTVNLNRDYVRVMDMGLLELTITAVKSDSDGEQTAPRFELHCSSDVVHIRTCSDSCAALMNLIQYVASYGDLHGPHKAEMKPGVPQRKPKVDSSARSSSHGPVLPEADQQILRDLMSDAMEEIDLQQASAPVGPQANGVLDEKSHTQEPCCSDLFLFPDESGNVSQESSPAYPSLTHHLISDAVTGVTAENDDFCILFAPKTVVQEKEEEPVIKIMVDDAIVIKDDYFSLPITRTDSSKAPLHFPIPAVRYVVKEVSLVWHLYGGKDFATAPPTSPAKSYIPHSSPSQTPTRHGRHTVCGGKGRNHDFLMEIQLSKVKFQHEVYPPCKPECESSLLEHPVSRQVFIVQDLEIRDRLATSQMNKFLYLYCSKDMPRKAHSNMLTIKALHVRPESGRSPQECCLRVSLMPLRLNIDQDALFFLKDFFTSLSTEVELLLTPDPEVTKSPGADVTCSLPRHLSTSKEPNLVVSFPGPKQASPNHRANSAEGGNGLEEDVSAEETSFSDQPVFFREFRFTAEVPIRLDYHGKHVSMDQGTLAGILIGLAQLNCSELKLKRLFYRHGLLGIDKLFSYAISEWLSDIKKNQLPGILGGVGPMHSLVQLVQGLKDLVWLPIEQYRKDGRIVRGFQRGAASFGTSTAMAALELTNRMVQTIQAAAETAYDMVSPSTLSIEPKKAKRFPHHRLAHQPVDLREGVAKAYSVVKEGITDTAQTIYETAAREHESRGVTGAVGEVLRQIPPAVVRPLIVATEATSNVLGGMRNQIRPDVRQDESQKWRHGED.

The Chorein N-terminal domain occupies 13-107 (ACRYLLQRYL…LEMVFRPRPR (95 aa)). Phosphoserine occurs at positions 255, 379, 496, 839, 885, 898, and 1007. Residue Tyr-1011 is modified to Phosphotyrosine. Residues Ser-1015 and Ser-1017 each carry the phosphoserine modification. Thr-1021 carries the phosphothreonine modification. The interval 1373-1403 (KAEMKPGVPQRKPKVDSSARSSSHGPVLPEA) is disordered. Ser-1525 carries the phosphoserine modification. Disordered regions lie at residues 1570–1593 (TSPA…GRHT), 1759–1792 (EPNL…EDVS), and 2055–2075 (RNQI…HGED). The span at 1578–1587 (PHSSPSQTPT) shows a compositional bias: polar residues. Residues 2058–2075 (IRPDVRQDESQKWRHGED) show a composition bias toward basic and acidic residues.

It belongs to the ATG2 family. In terms of assembly, interacts with WDR45/WIPI4.

It localises to the preautophagosomal structure membrane. The protein resides in the lipid droplet. Its subcellular location is the endoplasmic reticulum membrane. The enzyme catalyses a 1,2-diacyl-sn-glycero-3-phospho-L-serine(in) = a 1,2-diacyl-sn-glycero-3-phospho-L-serine(out). It catalyses the reaction a 1,2-diacyl-sn-glycero-3-phosphoethanolamine(in) = a 1,2-diacyl-sn-glycero-3-phosphoethanolamine(out). Functionally, lipid transfer protein required for both autophagosome formation and regulation of lipid droplet morphology and dispersion. Tethers the edge of the isolation membrane (IM) to the endoplasmic reticulum (ER) and mediates direct lipid transfer from ER to IM for IM expansion. Binds to the ER exit site (ERES), which is the membrane source for autophagosome formation, and extracts phospholipids from the membrane source and transfers them to ATG9 (ATG9A or ATG9B) to the IM for membrane expansion. Lipid transfer activity is enhanced by WDR45/WIPI4, which promotes ATG2B-association with phosphatidylinositol 3-monophosphate (PI3P)-containing membranes. The chain is Autophagy-related protein 2 homolog B from Mus musculus (Mouse).